Consider the following 332-residue polypeptide: 2,3-diketo-L-gulonate reductase (332 aa).

The active-site Proton donor is the histidine 44. NAD(+) is bound by residues 168 to 174 (ITMVDMS), 224 to 225 (WK), and 304 to 306 (GHE).

It belongs to the LDH2/MDH2 oxidoreductase family. DlgD subfamily. Homodimer.

The protein localises to the cytoplasm. It catalyses the reaction 3-dehydro-L-gulonate + NAD(+) = 2,3-dioxo-L-gulonate + NADH + H(+). It carries out the reaction 3-dehydro-L-gulonate + NADP(+) = 2,3-dioxo-L-gulonate + NADPH + H(+). Catalyzes the reduction of 2,3-diketo-L-gulonate in the presence of NADH, to form 3-keto-L-gulonate. The protein is 2,3-diketo-L-gulonate reductase of Salmonella agona (strain SL483).